The primary structure comprises 513 residues: ATP synthase subunit alpha (513 aa).

An ATP-binding site is contributed by 169–176 (GDRQTGKT).

The protein belongs to the ATPase alpha/beta chains family. In terms of assembly, F-type ATPases have 2 components, CF(1) - the catalytic core - and CF(0) - the membrane proton channel. CF(1) has five subunits: alpha(3), beta(3), gamma(1), delta(1), epsilon(1). CF(0) has three main subunits: a(1), b(2) and c(9-12). The alpha and beta chains form an alternating ring which encloses part of the gamma chain. CF(1) is attached to CF(0) by a central stalk formed by the gamma and epsilon chains, while a peripheral stalk is formed by the delta and b chains.

The protein localises to the cell inner membrane. It catalyses the reaction ATP + H2O + 4 H(+)(in) = ADP + phosphate + 5 H(+)(out). Its function is as follows. Produces ATP from ADP in the presence of a proton gradient across the membrane. The alpha chain is a regulatory subunit. This is ATP synthase subunit alpha from Salmonella agona (strain SL483).